The sequence spans 196 residues: Small ribosomal subunit protein uS4c (196 aa).

The segment at 17–36 (ALPGLTRKTPKSGSNLKKKF) is disordered. In terms of domain architecture, S4 RNA-binding spans 89-150 (MRLDNIVFRL…NQRSKRLVQN (62 aa)).

This sequence belongs to the universal ribosomal protein uS4 family. In terms of assembly, part of the 30S ribosomal subunit. Contacts protein S5. The interaction surface between S4 and S5 is involved in control of translational fidelity.

It is found in the plastid. Its subcellular location is the chloroplast. In terms of biological role, one of the primary rRNA binding proteins, it binds directly to 16S rRNA where it nucleates assembly of the body of the 30S subunit. With S5 and S12 plays an important role in translational accuracy. This chain is Small ribosomal subunit protein uS4c (rps4), found in Tragus racemosus (Carrot grass).